The sequence spans 296 residues: Urease accessory protein UreD (296 aa).

The protein belongs to the UreD family. In terms of assembly, ureD, UreF and UreG form a complex that acts as a GTP-hydrolysis-dependent molecular chaperone, activating the urease apoprotein by helping to assemble the nickel containing metallocenter of UreC. The UreE protein probably delivers the nickel.

The protein resides in the cytoplasm. In terms of biological role, required for maturation of urease via the functional incorporation of the urease nickel metallocenter. The sequence is that of Urease accessory protein UreD from Janthinobacterium sp. (strain Marseille) (Minibacterium massiliensis).